A 344-amino-acid polypeptide reads, in one-letter code: Heat-inducible transcription repressor HrcA (344 aa).

The protein belongs to the HrcA family.

Negative regulator of class I heat shock genes (grpE-dnaK-dnaJ and groELS operons). Prevents heat-shock induction of these operons. The polypeptide is Heat-inducible transcription repressor HrcA (Anoxybacillus flavithermus (strain DSM 21510 / WK1)).